The sequence spans 192 residues: Small ribosomal subunit protein uS5 (192 aa).

The S5 DRBM domain occupies 20–83 (FVDKLVHINR…EAAKRGLIRV (64 aa)). The interval 162–192 (SVAARRGLKVSALQARRRDADPADTSDAAVA) is disordered.

Belongs to the universal ribosomal protein uS5 family. In terms of assembly, part of the 30S ribosomal subunit. Contacts proteins S4 and S8.

With S4 and S12 plays an important role in translational accuracy. Functionally, located at the back of the 30S subunit body where it stabilizes the conformation of the head with respect to the body. The protein is Small ribosomal subunit protein uS5 of Methylorubrum populi (strain ATCC BAA-705 / NCIMB 13946 / BJ001) (Methylobacterium populi).